Consider the following 440-residue polypeptide: Oligodendrocyte-myelin glycoprotein (440 aa).

A signal peptide spans 1 to 24 (MEYQILKMSLCLFILLFLTPGILC). In terms of domain architecture, LRRNT spans 25–55 (ICPLQCICTERHRHVDCSGRNLSTLPSGLQE). Residues Asn-45 and Asn-61 are each glycosylated (N-linked (GlcNAc...) asparagine). LRR repeat units follow at residues 56 to 77 (NIIH…LTQY), 79 to 100 (NLRT…LPRS), 101 to 121 (LWNM…DTAY), 124 to 145 (NLKY…KNTL), 147 to 168 (SLEV…MPSK), 169 to 189 (LHIV…TLIN), 192 to 213 (NLTH…SFDQ), and 216 to 239 (QLQE…TYLL). An N-linked (GlcNAc...) asparagine glycan is attached at Asn-103. Asn-152, Asn-176, Asn-189, Asn-192, and Asn-234 each carry an N-linked (GlcNAc...) asparagine glycan. Ser/Thr-rich repeat units lie at residues 229–270 (CDHK…YPTP), 271–292 (SGFT…INSL), 293–335 (SVVT…VPYP), 336–377 (EDTS…SPTP), and 378–416 (MTLS…TPLP). N-linked (GlcNAc...) asparagine glycosylation is found at Asn-364 and Asn-389. Residue Ser-417 is the site of GPI-anchor amidated serine attachment. A propeptide spans 418-440 (VANAWKVNASFLLLLNVVVMLAV) (removed in mature form). A glycan (N-linked (GlcNAc...) asparagine) is linked at Asn-425.

Binds to RTN4R. Post-translationally, O-glycosylated in its Ser/Thr-rich repeat domain. As to expression, oligodendrocytes and myelin of the central nervous system.

The protein resides in the cell membrane. In terms of biological role, cell adhesion molecule contributing to the interactive process required for myelination in the central nervous system. This chain is Oligodendrocyte-myelin glycoprotein (OMG), found in Homo sapiens (Human).